The chain runs to 327 residues: Cobalamin biosynthesis protein CobD (327 aa).

A run of 4 helical transmembrane segments spans residues 61 to 78 (MWLT…GLVI), 80 to 102 (SILP…ILLA), 160 to 182 (GIVA…YKLI), and 300 to 322 (AALV…ASLV).

It belongs to the CobD/CbiB family.

It localises to the cell membrane. It functions in the pathway cofactor biosynthesis; adenosylcobalamin biosynthesis. Its function is as follows. Converts cobyric acid to cobinamide by the addition of aminopropanol on the F carboxylic group. This is Cobalamin biosynthesis protein CobD from Brucella suis biovar 1 (strain 1330).